We begin with the raw amino-acid sequence, 386 residues long: Cytochrome b (386 aa).

4 consecutive transmembrane segments (helical) span residues 32-52 (TGSL…FTAM), 76-98 (YLIR…GHIG), 113-133 (VWVI…TGYC), and 179-199 (FFAL…MHLM). Positions 82 and 96 each coordinate heme b. Residues His-183 and His-197 each contribute to the heme b site. His-202 provides a ligand contact to a ubiquinone. A run of 4 helical transmembrane segments spans residues 225–245 (FVFK…TFVF), 289–309 (LGGV…PVTD), 321–341 (FSKT…QLGQ), and 348–368 (FIEM…VLVP).

Belongs to the cytochrome b family. As to quaternary structure, fungal cytochrome b-c1 complex contains 10 subunits; 3 respiratory subunits, 2 core proteins and 5 low-molecular weight proteins. Cytochrome b-c1 complex is a homodimer. Heme b is required as a cofactor.

It is found in the mitochondrion inner membrane. In terms of biological role, component of the ubiquinol-cytochrome c reductase complex (complex III or cytochrome b-c1 complex) that is part of the mitochondrial respiratory chain. The b-c1 complex mediates electron transfer from ubiquinol to cytochrome c. Contributes to the generation of a proton gradient across the mitochondrial membrane that is then used for ATP synthesis. The chain is Cytochrome b (COB) from Wickerhamomyces pijperi (Yeast).